The chain runs to 213 residues: Anti-sigma-W factor RsiW (213 aa).

Topologically, residues 1-86 are cytoplasmic; it reads MSCEQHYRTL…TNRFKVWMRR (86 aa). 3 residues coordinate Zn(2+): H30, C34, and C37. Residues 87 to 109 form a helical membrane-spanning segment; sequence YPLAVAAAVFVLLMSTSLFSMWS. Topologically, residues 110-213 are extracellular; the sequence is SDGEHVTVTG…ISDEKNSPSS (104 aa).

This sequence belongs to the zinc-associated anti-sigma factor (ZAS) superfamily. Anti-sigma-W factor family. It depends on Zn(2+) as a cofactor. Is processed by three successive proteolytic events. First, the extracellular region of RsiW is cleaved by PrsW (Site-1 cleavage) in response to cell envelope stresses. Next, it undergoes cleavage at an intramembrane site (Site-2 cleavage) mediated by RasP. This cleavage uncovers a cryptic proteolytic tag with conserved alanine residues in the transmembrane segment, that is recognized mainly by the ClpXP protease, which completely degrades the protein in the cytoplasm and leads to the induction of the sigma-W-controlled genes.

It is found in the membrane. Functionally, is the anti-sigma factor for SigW. The presence of RsiW leads to the inactivation of SigW, and its proteolytic destruction to sigma-W activation. The chain is Anti-sigma-W factor RsiW (rsiW) from Halalkalibacterium halodurans (strain ATCC BAA-125 / DSM 18197 / FERM 7344 / JCM 9153 / C-125) (Bacillus halodurans).